The chain runs to 425 residues: Dihydroorotase (425 aa).

Residues His56 and His58 each contribute to the Zn(2+) site. Substrate contacts are provided by residues 58–60 and Asn90; that span reads HYR. Zn(2+) is bound by residues Asp148, His175, and His228. Residue Asn274 coordinates substrate. Residue Asp301 coordinates Zn(2+). The active site involves Asp301. Substrate-binding positions include His305 and 319 to 320; that span reads FG.

This sequence belongs to the metallo-dependent hydrolases superfamily. DHOase family. Class I DHOase subfamily. Zn(2+) is required as a cofactor.

The catalysed reaction is (S)-dihydroorotate + H2O = N-carbamoyl-L-aspartate + H(+). It participates in pyrimidine metabolism; UMP biosynthesis via de novo pathway; (S)-dihydroorotate from bicarbonate: step 3/3. Functionally, catalyzes the reversible cyclization of carbamoyl aspartate to dihydroorotate. The sequence is that of Dihydroorotase from Lactobacillus delbrueckii subsp. bulgaricus (strain ATCC BAA-365 / Lb-18).